The sequence spans 1480 residues: ABC transporter G family member 49 (1480 aa).

The span at 1 to 18 (MHTTTQATPQKSMVMTTT) shows a compositional bias: polar residues. 3 disordered regions span residues 1 to 42 (MHTT…AGSS), 60 to 81 (VSGE…EDDE), and 104 to 124 (SSTR…GGAA). 2 stretches are compositionally biased toward gly residues: residues 63–73 (ELGGGGGGGGG) and 107–123 (RGGG…GGGA). An ABC transporter 1 domain is found at 212–485 (LAAKLGFSHH…FESCGFKCPE (274 aa)). 245–252 (GPPGCGKT) contributes to the ATP binding site. The ABC transmembrane type-2 1 domain occupies 563 to 775 (HLLKACFDRE…AEIGLTGNEF (213 aa)). Helical transmembrane passes span 581-601 (FLHI…GTVF), 619-639 (SLFY…VMSI), 656-676 (GWAY…VAAL), 699-719 (LLVL…VGSY), 725-745 (VGPI…GFLI), and 811-831 (VAAL…GLTI). Positions 877–1129 (ISFQDVNYYV…KVIQYFQSIP (253 aa)) constitute an ABC transporter 2 domain. ATP is bound at residue 922–929 (GVTGAGKT). The region spanning 1202-1418 (EQFKACLWKQ…TLNLLFTTQF (217 aa)) is the ABC transmembrane type-2 2 domain. 7 helical membrane passes run 1226 to 1246 (IVFM…QGNI), 1254 to 1274 (GLFT…INNS), 1311 to 1331 (IPYV…TIGY), 1340 to 1360 (WFFY…MLIV), 1368 to 1388 (VASI…GFVM), 1396 to 1416 (WWIW…LFTT), and 1449 to 1469 (LLPL…ILYG).

It belongs to the ABC transporter superfamily. ABCG family. PDR (TC 3.A.1.205) subfamily.

Its subcellular location is the membrane. In terms of biological role, may be a general defense protein. This chain is ABC transporter G family member 49, found in Oryza sativa subsp. japonica (Rice).